Consider the following 253-residue polypeptide: Phosphate import ATP-binding protein PstB 1 (253 aa).

One can recognise an ABC transporter domain in the interval 7-248; sequence LQIRDLSVYY…PKRKETEDYI (242 aa). Residue 39 to 46 participates in ATP binding; the sequence is GPSGSGKS.

The protein belongs to the ABC transporter superfamily. Phosphate importer (TC 3.A.1.7) family. In terms of assembly, the complex is composed of two ATP-binding proteins (PstB), two transmembrane proteins (PstC and PstA) and a solute-binding protein (PstS).

It is found in the cell membrane. The catalysed reaction is phosphate(out) + ATP + H2O = ADP + 2 phosphate(in) + H(+). Functionally, part of the ABC transporter complex PstSACB involved in phosphate import. Responsible for energy coupling to the transport system. The sequence is that of Phosphate import ATP-binding protein PstB 1 from Streptococcus pyogenes serotype M12 (strain MGAS9429).